Consider the following 383-residue polypeptide: WD repeat-containing protein 55 (383 aa).

Basic and acidic residues predominate over residues 1–11 (MDRTCEERPAE). Residues 1–33 (MDRTCEERPAEDGSDEEDPDSMEAPTRIRDTPE) form a disordered region. Residues 12 to 21 (DGSDEEDPDS) are compositionally biased toward acidic residues. Residue serine 14 is modified to Phosphoserine. 7 WD repeats span residues 36–75 (VLEA…GETK), 82–121 (HHLK…LERR), 125–163 (AHGA…PLMD), 166–205 (QHEE…FELL), 208–247 (PQSG…ATSD), 250–289 (ALRA…VVGS), and 293–332 (HTGE…AVVV). At serine 354 the chain carries Phosphoserine. The interval 363–383 (REEGEDSMAQEEKEETGDDSD) is disordered. A compositionally biased stretch (acidic residues) spans 365–383 (EGEDSMAQEEKEETGDDSD). Threonine 378 bears the Phosphothreonine mark. Serine 382 is modified (phosphoserine).

This sequence belongs to the WD repeat WDR55 family.

The protein resides in the nucleus. Its subcellular location is the nucleolus. It localises to the cytoplasm. Its function is as follows. Nucleolar protein that acts as a modulator of rRNA synthesis. Plays a central role during organogenesis. This is WD repeat-containing protein 55 (WDR55) from Homo sapiens (Human).